A 709-amino-acid chain; its full sequence is Myotubularin-related protein 11 (709 aa).

The disordered stretch occupies residues 1-39 (MWWGGRGQSFNIAPQKEEPEMGSVQENRMPEPRSRQPSS). In terms of domain architecture, Myotubularin phosphatase spans 196–639 (METAEDWETE…PQIRLWRRCY (444 aa)).

Belongs to the protein-tyrosine phosphatase family. Non-receptor class myotubularin subfamily. As to expression, expressed in bone marrow, spleen and thymus.

The polypeptide is Myotubularin-related protein 11 (MTMR11) (Homo sapiens (Human)).